The primary structure comprises 454 residues: MSHNDTIVAQATPPGRGGVGILRISGLNAKKVAQTVLGKLPKPRYADYLPFKDADGATLDQGIALWFPGPNSFTGEDVLELQGHGGPVILDLLLKRILTIPGVRIARPGEFSERAFLNDKLDLAQAEAIADLIDASSEQAARSALNSLQGAFSARVNHLVEALTHLRIYVEAAIDFPDEEIDFLSDGKIEAQLNGVIADLDAVRAEARQGSLLREGMKVVIAGRPNAGKSSLLNALAGREAAIVTDIAGTTRDVLREHIHIDGMPLHVIDTAGLRDASDEVERIGIERAWQEIEQADRVLFMVDGTTTDAVDPGDIWPDFIARLPKNLPITVVRNKADITGEMLGISEVNGHSLVRLSARTGEGVDVLRNHLKQSMGFDTNMEGGFLARRRHLQALAEAAEHLEQGKAQLLGAWAGELLAEELRLAQQSLSEITGEFTSDDLLGRIFSSFCIGK.

Residues Arg23, Glu80, and Lys120 each coordinate (6S)-5-formyl-5,6,7,8-tetrahydrofolate. The TrmE-type G domain maps to 216 to 377 (GMKVVIAGRP…LRNHLKQSMG (162 aa)). A K(+)-binding site is contributed by Asn226. GTP contacts are provided by residues 226-231 (NAGKSS), 245-251 (TDIAGTT), 270-273 (DTAG), 335-338 (NKAD), and 358-360 (SAR). Ser230 contributes to the Mg(2+) binding site. Residues Thr245, Ile247, and Thr250 each coordinate K(+). Thr251 provides a ligand contact to Mg(2+). Residue Lys454 participates in (6S)-5-formyl-5,6,7,8-tetrahydrofolate binding.

It belongs to the TRAFAC class TrmE-Era-EngA-EngB-Septin-like GTPase superfamily. TrmE GTPase family. Homodimer. Heterotetramer of two MnmE and two MnmG subunits. The cofactor is K(+).

The protein localises to the cytoplasm. Exhibits a very high intrinsic GTPase hydrolysis rate. Involved in the addition of a carboxymethylaminomethyl (cmnm) group at the wobble position (U34) of certain tRNAs, forming tRNA-cmnm(5)s(2)U34. This chain is tRNA modification GTPase MnmE, found in Salmonella arizonae (strain ATCC BAA-731 / CDC346-86 / RSK2980).